The following is a 716-amino-acid chain: Probable extracellular serine carboxypeptidase (716 aa).

The signal sequence occupies residues 1–17 (MVKLTACLLLLVAAVQA). N143 and N174 each carry an N-linked (GlcNAc...) asparagine glycan. Catalysis depends on S188, which acts as the Charge relay system. N258 and N354 each carry an N-linked (GlcNAc...) asparagine glycan. D466 functions as the Charge relay system in the catalytic mechanism. N-linked (GlcNAc...) asparagine glycosylation is found at N507 and N550. A disordered region spans residues 617–636 (RDLAAQPSKSKKDRRGQQLS). A helical transmembrane segment spans residues 652-672 (LGFVSFLVFAFSSFTFIPDIE).

It belongs to the peptidase S28 family.

The protein localises to the membrane. It is found in the secreted. In Arthroderma benhamiae (strain ATCC MYA-4681 / CBS 112371) (Trichophyton mentagrophytes), this protein is Probable extracellular serine carboxypeptidase.